The following is a 143-amino-acid chain: Mite group 2 allergen Pso o 2 (143 aa).

An N-terminal signal peptide occupies residues 1–17; sequence MMKTLVVLAITLAVVSA. 3 disulfides stabilise this stretch: Cys25/Cys134, Cys38/Cys43, and Cys89/Cys94.

It belongs to the NPC2 family.

It localises to the secreted. The sequence is that of Mite group 2 allergen Pso o 2 (ALLA) from Psoroptes ovis (Sheep scab mite).